The sequence spans 834 residues: Dual specificity calcium/calmodulin-dependent 3',5'-cyclic nucleotide phosphodiesterase 1 (834 aa).

The interval 152–338 (HSHGRDDQQQ…DELSEVQPDA (187 aa)) is disordered. Over residues 207–222 (THSGPTGPPSNTSSET) the composition is skewed to low complexity. The segment covering 236 to 252 (TVRESVMEESPSKDPGD) has biased composition (basic and acidic residues). Positions 260–301 (STSTLTSQTTTSSSATAEPSAKAAESQAGSAGSSGSCSNPAA) are enriched in low complexity. Residues 313 to 322 (WARSMSTNKT) are compositionally biased toward polar residues. Residues 364 to 387 (EKPKFRSVAHAIRAGIFVDRMYRR) are calmodulin-binding. The 395-residue stretch at 392-786 (ALTAFPPDVV…RIWKEQAVKD (395 aa)) folds into the PDEase domain. His469 (proton donor) is an active-site residue. Residues His473, His509, Asp510, and Asp617 each coordinate Zn(2+). Mg(2+) is bound at residue Asp510. 2 disordered regions span residues 720–744 (IVIP…AKTT) and 797–834 (EEAA…GAAA). Basic and acidic residues predominate over residues 732–741 (DKPRDHRTEA). Positions 823–834 (EPAAEPADGAAA) are enriched in low complexity.

Belongs to the cyclic nucleotide phosphodiesterase family. PDE1 subfamily. Zn(2+) is required as a cofactor. Requires Mg(2+) as cofactor. Expressed in the head (at protein level). Expressed in Malpighian tubules. Expressed in neurons in the brain and ventral ganglia with male flies having higher levels of expression in the abdominal ganglia compared to female flies.

It carries out the reaction a nucleoside 3',5'-cyclic phosphate + H2O = a nucleoside 5'-phosphate + H(+). It catalyses the reaction 3',5'-cyclic GMP + H2O = GMP + H(+). The enzyme catalyses 3',5'-cyclic AMP + H2O = AMP + H(+). Type I PDE are activated by the binding of calmodulin in the presence of Ca(2+). Inhibited by zaprinast and sildenafil. Cyclic nucleotide phosphodiesterase with a dual specificity for the second messengers cAMP and cGMP, which are key regulators of many important physiological processes. Required for male fertility and male mating behavior. The protein is Dual specificity calcium/calmodulin-dependent 3',5'-cyclic nucleotide phosphodiesterase 1 of Drosophila melanogaster (Fruit fly).